Reading from the N-terminus, the 552-residue chain is Glutamyl-tRNA reductase 1, chloroplastic (552 aa).

Substrate-binding positions include 150–153 (TCNR), S210, 215–217 (EGQ), and Q221. The active-site Nucleophile is C151. An NADP(+)-binding site is contributed by 292–297 (GAGKMG).

It belongs to the glutamyl-tRNA reductase family. In terms of tissue distribution, primarily in cotyledons and hypocotyls of greening cucumber seedlings.

It localises to the plastid. The protein resides in the chloroplast. It carries out the reaction (S)-4-amino-5-oxopentanoate + tRNA(Glu) + NADP(+) = L-glutamyl-tRNA(Glu) + NADPH + H(+). The protein operates within porphyrin-containing compound metabolism; protoporphyrin-IX biosynthesis; 5-aminolevulinate from L-glutamyl-tRNA(Glu): step 1/2. Functionally, catalyzes the NADPH-dependent reduction of glutamyl-tRNA(Glu) to glutamate 1-semialdehyde (GSA). The chain is Glutamyl-tRNA reductase 1, chloroplastic (HEMA1) from Cucumis sativus (Cucumber).